Here is a 1012-residue protein sequence, read N- to C-terminus: ATP-dependent DNA helicase MPH1 (1012 aa).

Positions 94-261 (IVQKSLYQNT…EVVNNLNISN (168 aa)) constitute a Helicase ATP-binding domain. 107-114 (IPTGMGKT) lines the ATP pocket. The DEAH box motif lies at 209–212 (DEAH). The Helicase C-terminal domain maps to 430–654 (KLQKIINELS…NFVEYKKSDR (225 aa)). Positions 493–555 (DEGFIRKNKP…AQISGMNQKQ (63 aa)) are disordered. The segment covering 498–510 (RKNKPKGRKKADR) has biased composition (basic residues). Basic and acidic residues predominate over residues 511 to 537 (LKRLEEDKQKQLSKAKQKEQEKVERSS).

This sequence belongs to the DEAD box helicase family. DEAH subfamily. FANCM sub-subfamily. In terms of assembly, interacts with the MHF histone-fold complex to form the FANCM-MHF complex.

Its subcellular location is the nucleus. It carries out the reaction ATP + H2O = ADP + phosphate + H(+). Its function is as follows. ATP-dependent DNA helicase involved in DNA damage repair by homologous recombination and in genome maintenance. Capable of unwinding D-loops. Plays a role in limiting crossover recombinants during mitotic DNA double-strand break (DSB) repair. Component of a FANCM-MHF complex which promotes gene conversion at blocked replication forks, probably by reversal of the stalled fork. This Vanderwaltozyma polyspora (strain ATCC 22028 / DSM 70294 / BCRC 21397 / CBS 2163 / NBRC 10782 / NRRL Y-8283 / UCD 57-17) (Kluyveromyces polysporus) protein is ATP-dependent DNA helicase MPH1.